The following is a 2532-amino-acid chain: Lovastatin diketide synthase lovF (2532 aa).

Residues 10–430 form the Ketosynthase family 3 (KS3) domain; sequence PAPIAMVGMG…GANAHAIVEQ (421 aa). Active-site for beta-ketoacyl synthase activity residues include Cys-183, His-318, and His-353. The segment at 545-870 is malonyl-CoA:ACP transacylase (MAT) domain; that stretch reads VFTGQGAQWF…PYLSCLSRGK (326 aa). Ser-635 functions as the For malonyltransferase activity in the catalytic mechanism. The segment at 941–1078 is N-terminal hotdog fold; it reads HDLIGLQEPL…GLVRAEMDQP (138 aa). The dehydratase (DH) domain stretch occupies residues 941 to 1246; sequence HDLIGLQEPL…LEGLVFQSLG (306 aa). Positions 941 to 1251 constitute a PKS/mFAS DH domain; it reads HDLIGLQEPL…FQSLGASLGT (311 aa). His-973 serves as the catalytic Proton acceptor; for dehydratase activity. The segment at 1075-1094 is disordered; it reads MDQPPSSLSNQQRIDPRPWS. The span at 1078 to 1087 shows a compositional bias: polar residues; the sequence is PPSSLSNQQR. Residues 1092–1251 are C-terminal hotdog fold; that stretch reads PWSRKTAPQE…FQSLGASLGT (160 aa). Asp-1159 (proton donor; for dehydratase activity) is an active-site residue. The interval 1423–1607 is methyltransferase (CMet) domain; that stretch reads ELVRLCCHKN…ARDCDSHEFY (185 aa). Residues 1825–2144 form an enoylreductase (ER) domain region; sequence GLLDSLHFTK…SGQHVGKIVV (320 aa). The tract at residues 2168 to 2340 is ketoreductase (KR) domain; that stretch reads SYLVAGGLGG…AVTIDLGMVQ (173 aa). The Carrier domain maps to 2453–2530; the sequence is ESIAVIMEAM…KVAEVVLQRY (78 aa). The residue at position 2490 (Ser-2490) is an O-(pantetheine 4'-phosphoryl)serine.

In terms of assembly, interacts with LovD. The cofactor is pantetheine 4'-phosphate.

It carries out the reaction holo-[2-methylbutanoate polyketide synthase] + 2 malonyl-CoA + S-adenosyl-L-methionine + 2 NADPH + 3 H(+) = (S)-2-methylbutanoyl-[2-methylbutanoate polyketide synthase] + S-adenosyl-L-homocysteine + 2 CO2 + 2 NADP(+) + 2 CoA + H2O. Its pathway is polyketide biosynthesis; lovastatin biosynthesis. Lovastatin diketide synthase; part of the gene cluster that mediates the biosynthesis of lovastatin (also known as mevinolin, mevacor or monacolin K), a hypolipidemic inhibitor of (3S)-hydroxymethylglutaryl-coenzyme A (HMG-CoA) reductase (HMGR). The first step in the biosynthesis of lovastatin is the production of dihydromonacolin L acid by the lovastatin nonaketide synthase lovB and the trans-acting enoyl reductase lovC via condensation of one acetyl-CoA unit and 8 malonyl-CoA units. Dihydromonacolin L acid is released from lovB by the thioesterase lovG. Next, dihydromonacolin L acid is oxidized by the dihydromonacolin L monooxygenase lovA twice to form monacolin J acid. The 2-methylbutyrate moiety of lovastatin is synthesized by the lovastatin diketide synthase lovF via condensation of one acetyl-CoA unit and one malonyl-CoA unit. Finally, the covalent attachment of this moiety to monacolin J acid is catalyzed by the transesterase lovD to yield lovastatin. LovD has broad substrate specificity and can also convert monacolin J to simvastatin using alpha-dimethylbutanoyl-S-methyl-3-mercaptopropionate (DMB-S-MMP) as the thioester acyl donor, and can also catalyze the reverse reaction and function as hydrolase in vitro. LovD has much higher activity with LovF-bound 2-methylbutanoate than with free diketide substrates. This Aspergillus terreus protein is Lovastatin diketide synthase lovF.